A 298-amino-acid polypeptide reads, in one-letter code: Flavin-dependent thymidylate synthase (298 aa).

The ThyX domain maps to 41–251; sequence GFVRLVDYMG…PLTYAAFVEY (211 aa). FAD is bound by residues threonine 87, 110–112, and glutamate 118; that span reads RHR. DUMP-binding positions include 107-110, 118-122, and arginine 190; these read QWVR and EYSAR. A ThyX motif motif is present at residues 110 to 120; the sequence is RHRTANVNEYS. FAD-binding positions include 206 to 208 and histidine 212; that span reads DLH. Arginine 217 contributes to the dUMP binding site. Arginine 217 functions as the Involved in ionization of N3 of dUMP, leading to its activation in the catalytic mechanism.

This sequence belongs to the thymidylate synthase ThyX family. Homotetramer. It depends on FAD as a cofactor.

It catalyses the reaction dUMP + (6R)-5,10-methylene-5,6,7,8-tetrahydrofolate + NADPH + H(+) = dTMP + (6S)-5,6,7,8-tetrahydrofolate + NADP(+). It participates in pyrimidine metabolism; dTTP biosynthesis. Its function is as follows. Catalyzes the reductive methylation of 2'-deoxyuridine-5'-monophosphate (dUMP) to 2'-deoxythymidine-5'-monophosphate (dTMP) while utilizing 5,10-methylenetetrahydrofolate (mTHF) as the methyl donor, and NADPH and FADH(2) as the reductant. This is Flavin-dependent thymidylate synthase from Ehrlichia ruminantium (strain Welgevonden).